Consider the following 825-residue polypeptide: PR domain zinc finger protein 1 (825 aa).

The SET domain maps to 84–201 (PRNLLFKYAT…ANQELLVWYC (118 aa)). Positions 324-361 (ITRSPIPSSTTPSPSARSSPDQSLKSSSPHSSPGNTVS) are enriched in low complexity. Residues 324-369 (ITRSPIPSSTTPSPSARSSPDQSLKSSSPHSSPGNTVSPVGPGSQE) are disordered. The interaction with PIAS1 stretch occupies residues 527-574 (HVVQPKATSAAMAAPSSDEAMNLIKNKRNMTGYKTLPYPLKKQNGKIK). 4 consecutive C2H2-type zinc fingers follow at residues 575–597 (YECNVCAKTFGQLSNLKVHLRVH), 603–625 (FKCQTCNKGFTQLAHLQKHYLVH), 631–653 (HECQVCHKRFSSTSNLKTHLRLH), and 659–681 (YQCKVCPAKFTQFVHLKLHKRLH). Lysine 816 participates in a covalent cross-link: Glycyl lysine isopeptide (Lys-Gly) (interchain with G-Cter in SUMO1); alternate. Residue lysine 816 forms a Glycyl lysine isopeptide (Lys-Gly) (interchain with G-Cter in SUMO2); alternate linkage.

It belongs to the class V-like SAM-binding methyltransferase superfamily. As to quaternary structure, interacts with PRMT5. Interacts with FBXO10. Interacts with FBXO11. Interacts with multiple nuclear sumoylation E3 ligases, including CBX4, PIAS1, PIAS2, PIAS3, PIAS4, PML and RNF4, but not RANBP2. Interacts with LDB1, SMARCD3 and SMARCC1. Interacts with EEIG1; following TNFSF11/RANKL stimulation in bone marrow-derived macrophages, the interaction promotes the binding of PRDM1/BLIMP1 to the gene promoter of IRF8. In terms of processing, sumoylation at Lys-816 by PIAS1 augments transcriptional repressor activity, and is critical for plasma cell differentiation. Can be sumoylated with SUMO1 and SUMO2 by PML. Degradation of the wild-type protein mostly depends upon sumoylation, rather than ubiquitination. Desumoylated by SENP1 and SENP6. Post-translationally, ubiquitinated by the SCF(FBXO11) complex, leading to its degradation by the proteasome.

Its subcellular location is the nucleus. It localises to the cytoplasm. In terms of biological role, transcription factor that mediates a transcriptional program in various innate and adaptive immune tissue-resident lymphocyte T cell types such as tissue-resident memory T (Trm), natural killer (trNK) and natural killer T (NKT) cells and negatively regulates gene expression of proteins that promote the egress of tissue-resident T-cell populations from non-lymphoid organs. Plays a role in the development, retention and long-term establishment of adaptive and innate tissue-resident lymphocyte T cell types in non-lymphoid organs, such as the skin and gut, but also in other nonbarrier tissues like liver and kidney, and therefore may provide immediate immunological protection against reactivating infections or viral reinfection. Binds specifically to the PRDI element in the promoter of the beta-interferon gene. Drives the maturation of B-lymphocytes into Ig secreting cells. Associates with the transcriptional repressor ZNF683 to chromatin at gene promoter regions. Binds to the promoter and acts as a transcriptional repressor of IRF8, thereby promotes transcription of osteoclast differentiation factors such as NFATC1 and EEIG1. The polypeptide is PR domain zinc finger protein 1 (PRDM1) (Homo sapiens (Human)).